The following is a 248-amino-acid chain: Probable S-methyl-5'-thioinosine phosphorylase (248 aa).

Residues Thr12 and 54 to 55 (RH) contribute to the phosphate site. Met187 provides a ligand contact to substrate. Thr188 provides a ligand contact to phosphate. 211–213 (NWA) serves as a coordination point for substrate.

The protein belongs to the PNP/MTAP phosphorylase family. MTAP subfamily. As to quaternary structure, homotrimer.

The enzyme catalyses S-methyl-5'-thioinosine + phosphate = 5-(methylsulfanyl)-alpha-D-ribose 1-phosphate + hypoxanthine. The protein operates within purine metabolism; purine nucleoside salvage. Its function is as follows. Catalyzes the reversible phosphorylation of S-methyl-5'-thioinosine (MTI) to hypoxanthine and 5-methylthioribose-1-phosphate. Involved in the breakdown of S-methyl-5'-thioadenosine (MTA), a major by-product of polyamine biosynthesis. Catabolism of (MTA) occurs via deamination to MTI and phosphorolysis to hypoxanthine. This chain is Probable S-methyl-5'-thioinosine phosphorylase, found in Xylella fastidiosa (strain Temecula1 / ATCC 700964).